Consider the following 299-residue polypeptide: MLDKTRLRIAMQKSGRLSDESQELLARCGIKINLQQQRLIAFAENMPIDILRVRDDDIPGLVMDGVVDLGIIGENVLEEELLTRRAQGEDPRYFTLRRLDFGGCRLSLATSLDSEYTGPQSLQDARIATSYPHLLKQYLDKQGVRFKSCLLNGSVEVAPRAGLADAICDLVSTGATLEANGLREVEVIYRSKACLIQRDGEMPEAKQQLIDRLMTRIQGVIQARESKYIMLHAPSERLDEIVALLPGAERPTILPLAGAQNRVAMHMVSSETLFWETMEKLKALGASSILVLPIEKMME.

The protein belongs to the ATP phosphoribosyltransferase family. Long subfamily. In terms of assembly, equilibrium between an active dimeric form, an inactive hexameric form and higher aggregates. Interconversion between the various forms is largely reversible and is influenced by the natural substrates and inhibitors of the enzyme. Mg(2+) serves as cofactor.

Its subcellular location is the cytoplasm. It carries out the reaction 1-(5-phospho-beta-D-ribosyl)-ATP + diphosphate = 5-phospho-alpha-D-ribose 1-diphosphate + ATP. It functions in the pathway amino-acid biosynthesis; L-histidine biosynthesis; L-histidine from 5-phospho-alpha-D-ribose 1-diphosphate: step 1/9. Its activity is regulated as follows. Feedback inhibited by histidine. In terms of biological role, catalyzes the condensation of ATP and 5-phosphoribose 1-diphosphate to form N'-(5'-phosphoribosyl)-ATP (PR-ATP). Has a crucial role in the pathway because the rate of histidine biosynthesis seems to be controlled primarily by regulation of HisG enzymatic activity. In Serratia proteamaculans (strain 568), this protein is ATP phosphoribosyltransferase.